We begin with the raw amino-acid sequence, 491 residues long: Zinc finger and SCAN domain-containing protein 22 (491 aa).

Ser9 is subject to Phosphoserine. Positions 49–131 (RLRFRHFRYE…VLVEDLTQVL (83 aa)) constitute an SCAN box domain. Disordered regions lie at residues 134-161 (RGWD…SNVT) and 204-249 (FKKT…DKFD). Positions 214 to 224 (VPTDQRGRESG) are enriched in basic and acidic residues. Residues 225–241 (ASRNSSSAWPNLTSQEK) show a composition bias toward polar residues. 8 C2H2-type zinc fingers span residues 268-290 (SKCR…QKTH), 296-318 (YACS…QVVH), 324-346 (HECK…QRIH), 352-374 (YKCG…QRVH), 380-402 (YECD…QRIH), 408-430 (YKCD…LRIH), 436-458 (YQCK…QRIH), and 464-486 (YKCS…LRIH). Lys443 is covalently cross-linked (Glycyl lysine isopeptide (Lys-Gly) (interchain with G-Cter in SUMO2)).

This sequence belongs to the krueppel C2H2-type zinc-finger protein family.

It is found in the nucleus. In terms of biological role, may be involved in transcriptional regulation. The chain is Zinc finger and SCAN domain-containing protein 22 (ZSCAN22) from Homo sapiens (Human).